Consider the following 128-residue polypeptide: NADPH-dependent 7-cyano-7-deazaguanine reductase (128 aa).

The active-site Thioimide intermediate is Cys-34. Catalysis depends on Asp-41, which acts as the Proton donor. Substrate-binding positions include Val-56–Leu-58 and His-75–Glu-76.

Belongs to the GTP cyclohydrolase I family. QueF type 1 subfamily.

It localises to the cytoplasm. It catalyses the reaction 7-aminomethyl-7-carbaguanine + 2 NADP(+) = 7-cyano-7-deazaguanine + 2 NADPH + 3 H(+). It participates in tRNA modification; tRNA-queuosine biosynthesis. Its function is as follows. Catalyzes the NADPH-dependent reduction of 7-cyano-7-deazaguanine (preQ0) to 7-aminomethyl-7-deazaguanine (preQ1). This chain is NADPH-dependent 7-cyano-7-deazaguanine reductase, found in Thermomicrobium roseum (strain ATCC 27502 / DSM 5159 / P-2).